A 98-amino-acid polypeptide reads, in one-letter code: MSADAKHYDVIRKPLITEKTTMASENGAVVFEVAIDSNKPQIKEAVEAVFGVKVKAVNTTITKGKVKRFRGQLGTRKDVKKAYVTLEEGNTIDVSTGL.

This sequence belongs to the universal ribosomal protein uL23 family. In terms of assembly, part of the 50S ribosomal subunit. Contacts protein L29, and trigger factor when it is bound to the ribosome.

In terms of biological role, one of the early assembly proteins it binds 23S rRNA. One of the proteins that surrounds the polypeptide exit tunnel on the outside of the ribosome. Forms the main docking site for trigger factor binding to the ribosome. In Jannaschia sp. (strain CCS1), this protein is Large ribosomal subunit protein uL23.